Here is a 600-residue protein sequence, read N- to C-terminus: CoA ligase FVEG_12633 (600 aa).

Residues 170 to 174, histidine 214, 321 to 323, and 342 to 343 contribute to the ATP site; these read TSGTT, AAL, and ER. The tract at residues 241–342 is SBD1; the sequence is NSVWTRLAAP…QLTGGNVLLE (102 aa). The interval 343-420 is SBD2; the sequence is RYGMTEVGMA…LRGPTVFTGY (78 aa). Residue methionine 346 coordinates substrate. ATP is bound by residues threonine 347, aspartate 441, arginine 471, and lysine 564. Oxalate is bound at residue lysine 564.

Belongs to the ATP-dependent AMP-binding enzyme family.

In terms of biological role, coA ligase; part of the Fusarium detoxification of benzoxazolinone cluster 2 (FDB2) involved in the degradation of benzoxazolinones produced by the host plant. Maize, wheat, and rye produce the 2 benzoxazinone phytoanticipins 2,4-dihy-droxy-7-methoxy-1,4-benzoxazin-3-one (DIMBOA) and 2,4-dihydroxy-1,4-benzoxazin-3-one (DIBOA) that, due to their inherent instability once released, spontaneously degrade to the more stable corresponding benzoxazolinones, 6-methoxy-2-benzoxazolinone (MBOA) and 2-benzoxazolinone (BOA), respectively. The first step in the detoxification of benzoxazolinones involves the hydrolysis of the cyclic ester bond of benzoxazolinones by the FDB1 cluster gamma-lactamase MBL1 to aminophenols. MBL1 is able to convert BOA into 2-aminophenol (2-AP), as well as MBOA into 5-methoxy-2-aminophenol (2-AMP). The FDB2 cluster N-malonyltransferase FDB2/NAT1 then metabolizes aminophenols via N-malonylation to non-toxic malonamic acids. FDB2/NAT1 converts 2-AP into N-(2-hydroxyphenyl) malonamic acid (HPMA) and 2-AMP into N-(2-hydroxy-4-methoxyphenyl) malonamic acid (HMPMA). The duplicated dienlactone hydrolases DLH1 and DLH2 may provide redundant function for hydrolyzing the lactone moiety in the BOA molecule. The roles of the amidases an other enzymes encoded by the 2 FDB clusters have not been identified so far. The protein is CoA ligase FVEG_12633 of Gibberella moniliformis (strain M3125 / FGSC 7600) (Maize ear and stalk rot fungus).